A 145-amino-acid chain; its full sequence is Mitochondrial import receptor subunit TOM20 homolog (145 aa).

The Mitochondrial intermembrane segment spans residues 1–6 (MVGRNS). Residues 7 to 24 (AIAAGVCGALFIGYCIYF) form a helical membrane-spanning segment. The Cytoplasmic segment spans residues 25–145 (DRKRRSDPNF…AQSLAEDDVE (121 aa)). Residues K35, K56, K61, and K68 each participate in a glycyl lysine isopeptide (Lys-Gly) (interchain with G-Cter in ubiquitin) cross-link. S135 and S138 each carry phosphoserine.

The protein belongs to the Tom20 family. Forms part of the preprotein translocase complex of the outer mitochondrial membrane (TOM complex) which consists of at least 7 different proteins (TOMM5, TOMM6, TOMM7, TOMM20, TOMM22, TOMM40 and TOMM70). Interacts with TOM22. Interacts with APEX1. Interacts with TBC1D21. Upon mitochondrial depolarization, interacts with PINK1; the interaction is required for PINK1-TOM-TIM23 supercomplex formation which is critical for PINK1 stabilization at the outer mitochondrial membrane, kinase activation and downstream mitophagy. Post-translationally, ubiquitinated by PRKN during mitophagy, leading to its degradation and enhancement of mitophagy. Deubiquitinated by USP30. Expressed in brain, kidney, stomach, colon, jejunum, ileum, testis, ovary and oviduct (at protein level). In the brain, expressed in neural cells of the cerebrum and cerebellum (at protein level). In the kidney, expressed in the proximal to distal tubule in the cortex and the outer and inner zones of the medulla (at protein level). In the stomach, expressed in the basal layer of stratified squamous epithelia in the forestomach and in the gastric pit and fundic gland of the glandular stomach (at protein level). Expressed in epithelial cells of the jejunum, ileum, and colon (at protein level). In the testis, expressed by spermatocytes and spermatogonia (at protein level). In the ovaries, expressed by follicular epithelial cells and corpus luteum cells (at protein level). In the oviduct, expressed in the epithelia of the isthmus and the ciliated cells of the ampulla (at protein level). Expressed in the sperm midpiece (at protein level).

The protein resides in the mitochondrion outer membrane. Central component of the receptor complex responsible for the recognition and translocation of cytosolically synthesized mitochondrial preproteins. Together with TOM22 functions as the transit peptide receptor at the surface of the mitochondrion outer membrane and facilitates the movement of preproteins into the TOM40 translocation pore. Required for the translocation across the mitochondrial outer membrane of cytochrome P450 monooxygenases. The polypeptide is Mitochondrial import receptor subunit TOM20 homolog (Tomm20) (Mus musculus (Mouse)).